A 267-amino-acid polypeptide reads, in one-letter code: 4-hydroxy-tetrahydrodipicolinate reductase (267 aa).

NAD(+)-binding positions include glycine 12–methionine 17, aspartate 38, glycine 100–threonine 102, and alanine 126–phenylalanine 129. The active-site Proton donor/acceptor is the histidine 156. Histidine 157 serves as a coordination point for (S)-2,3,4,5-tetrahydrodipicolinate. The Proton donor role is filled by lysine 160. (S)-2,3,4,5-tetrahydrodipicolinate is bound at residue glycine 166–threonine 167.

It belongs to the DapB family.

It is found in the cytoplasm. The enzyme catalyses (S)-2,3,4,5-tetrahydrodipicolinate + NAD(+) + H2O = (2S,4S)-4-hydroxy-2,3,4,5-tetrahydrodipicolinate + NADH + H(+). It carries out the reaction (S)-2,3,4,5-tetrahydrodipicolinate + NADP(+) + H2O = (2S,4S)-4-hydroxy-2,3,4,5-tetrahydrodipicolinate + NADPH + H(+). It functions in the pathway amino-acid biosynthesis; L-lysine biosynthesis via DAP pathway; (S)-tetrahydrodipicolinate from L-aspartate: step 4/4. In terms of biological role, catalyzes the conversion of 4-hydroxy-tetrahydrodipicolinate (HTPA) to tetrahydrodipicolinate. The chain is 4-hydroxy-tetrahydrodipicolinate reductase from Bacillus pumilus (strain SAFR-032).